A 403-amino-acid polypeptide reads, in one-letter code: Tyrosine--tRNA ligase (403 aa).

Residues 42–51 (PTAPDLHLGH) carry the 'HIGH' region motif. The short motif at 226-230 (KMSKS) is the 'KMSKS' region element. Residue K229 coordinates ATP. An S4 RNA-binding domain is found at 336-396 (MPISAVLNKA…GKKAFGRVTL (61 aa)).

This sequence belongs to the class-I aminoacyl-tRNA synthetase family. TyrS type 2 subfamily. In terms of assembly, homodimer.

The protein localises to the cytoplasm. It carries out the reaction tRNA(Tyr) + L-tyrosine + ATP = L-tyrosyl-tRNA(Tyr) + AMP + diphosphate + H(+). Catalyzes the attachment of tyrosine to tRNA(Tyr) in a two-step reaction: tyrosine is first activated by ATP to form Tyr-AMP and then transferred to the acceptor end of tRNA(Tyr). This is Tyrosine--tRNA ligase from Pseudomonas savastanoi pv. phaseolicola (strain 1448A / Race 6) (Pseudomonas syringae pv. phaseolicola (strain 1448A / Race 6)).